Here is a 257-residue protein sequence, read N- to C-terminus: Movement protein (257 aa).

Residues 212–257 are disordered; sequence NQSKKGSNKYVGKRNDNKGLNKEGKLFDKVRIGQNSESSDAESSSF. Positions 224–242 are enriched in basic and acidic residues; the sequence is KRNDNKGLNKEGKLFDKVR. The span at 247–257 shows a compositional bias: low complexity; the sequence is SESSDAESSSF.

This sequence belongs to the tobamovirus movement protein family.

The protein resides in the host cytoplasm. It is found in the host cytoskeleton. Its subcellular location is the host cell junction. It localises to the host plasmodesma. Transports viral genome to neighboring plant cells directly through plasmosdesmata, without any budding. The movement protein allows efficient cell to cell propagation, by bypassing the host cell wall barrier. Forms a ribonucleoprotein complex with viral RNA. Binds microtubules and modulates microtubule stability. Can bind double-stranded DNA. The polypeptide is Movement protein (MP) (Vicia faba (Broad bean)).